The chain runs to 493 residues: Dynein regulatory complex subunit 2 (493 aa).

Coiled coils occupy residues 99–163 (DSVI…RKLI) and 253–280 (KDEK…ILKG).

It belongs to the DRC2 family. In terms of assembly, component of the nexin-dynein regulatory complex (N-DRC). Interacts with DRC1.

Its subcellular location is the cytoplasm. The protein resides in the cytoskeleton. It is found in the flagellum basal body. It localises to the cell projection. The protein localises to the cilium. Its subcellular location is the flagellum. The protein resides in the flagellum axoneme. In terms of biological role, component of the nexin-dynein regulatory complex (N-DRC), a key regulator of ciliary/flagellar motility which maintains the alignment and integrity of the distal axoneme and regulates microtubule sliding in motile axonemes. Plays a critical role in the assembly of N-DRC and also stabilizes the assembly of multiple inner dynein arms and radial spokes. Coassembles with DRC1 to form a central scaffold needed for assembly of the N-DRC and its attachment to the outer doublet microtubules. In Mus musculus (Mouse), this protein is Dynein regulatory complex subunit 2 (Ccdc65).